Here is a 240-residue protein sequence, read N- to C-terminus: Ribosomal RNA small subunit methyltransferase I (240 aa).

This sequence belongs to the methyltransferase superfamily. RsmI family.

It localises to the cytoplasm. The catalysed reaction is cytidine(1402) in 16S rRNA + S-adenosyl-L-methionine = 2'-O-methylcytidine(1402) in 16S rRNA + S-adenosyl-L-homocysteine + H(+). Functionally, catalyzes the 2'-O-methylation of the ribose of cytidine 1402 (C1402) in 16S rRNA. This Leptospira biflexa serovar Patoc (strain Patoc 1 / ATCC 23582 / Paris) protein is Ribosomal RNA small subunit methyltransferase I.